We begin with the raw amino-acid sequence, 540 residues long: Keratin, type II cytoskeletal 73 (540 aa).

The interval 1-131 (MSRQFTYKSG…DPEIQKVRAQ (131 aa)) is head. The segment at 132–167 (EREQIKVLNNKFASFIDKVRFLEQQNQVLETKWELL) is coil 1A. The 314-residue stretch at 132 to 445 (EREQIKVLNN…KLLEGEECRM (314 aa)) folds into the IF rod domain. A linker 1 region spans residues 168 to 186 (QQLDLNNCKNNLEPILEGY). The tract at residues 187 to 278 (ISNLRKQLET…CLYEGETAQI (92 aa)) is coil 1B. A linker 12 region spans residues 279-302 (QSHISDTSIILSMDNNRNLDLDSI). A coil 2 region spans residues 303-441 (IAEVRAQYEE…ATYRKLLEGE (139 aa)). The interval 442–540 (ECRMSGEYTN…LSSPTKKTMR (99 aa)) is tail. The segment at 502 to 540 (SGNCSPRGEARTRLGSASEFRDSQGKTLALSSPTKKTMR) is disordered. Polar residues predominate over residues 526–540 (GKTLALSSPTKKTMR).

It belongs to the intermediate filament family. Heterotetramer of two type I and two type II keratins. As to expression, highly expressed in hair follicles from scalp. In hair, it is specifically present in the inner root sheath (IRS) of the hair follicle. Present in the IRS cuticle, but not in Henle or Huxley layers of the IRS. In the IRS cuticle, it is expressed between the lowermost bulb region of the cuticle and the region where Henle cells undergo abrupt terminal differentiation. Detected up to the uppermost cortex region where cuticle cells terminally differentiate (at protein level).

Functionally, has a role in hair formation. Specific component of keratin intermediate filaments in the inner root sheath (IRS) of the hair follicle. The sequence is that of Keratin, type II cytoskeletal 73 (KRT73) from Homo sapiens (Human).